The primary structure comprises 331 residues: DNA-directed RNA polymerase subunit alpha (331 aa).

The interval 1 to 230 is alpha N-terminal domain (alpha-NTD); sequence MKNIKTSPYI…KQMSVFNSEW (230 aa). Positions 247 to 331 are alpha C-terminal domain (alpha-CTD); it reads LKPLLQKIEA…ALQKRLNKLK (85 aa).

Belongs to the RNA polymerase alpha chain family. Homodimer. The RNAP catalytic core consists of 2 alpha, 1 beta/beta' and 1 omega subunit. When a sigma factor is associated with the core the holoenzyme is formed, which can initiate transcription.

It catalyses the reaction RNA(n) + a ribonucleoside 5'-triphosphate = RNA(n+1) + diphosphate. Functionally, DNA-dependent RNA polymerase catalyzes the transcription of DNA into RNA using the four ribonucleoside triphosphates as substrates. The chain is DNA-directed RNA polymerase subunit alpha from Wolinella succinogenes (strain ATCC 29543 / DSM 1740 / CCUG 13145 / JCM 31913 / LMG 7466 / NCTC 11488 / FDC 602W) (Vibrio succinogenes).